A 40-amino-acid chain; its full sequence is Sarcotoxin-1D (40 aa).

Belongs to the cecropin family.

The protein localises to the secreted. In terms of biological role, sarcotoxins, which are potent bactericidal proteins, are produced in response to injury. They are cytotoxic to both Gram-positive and Gram-negative bacteria. This Sarcophaga peregrina (Flesh fly) protein is Sarcotoxin-1D.